We begin with the raw amino-acid sequence, 328 residues long: Tetraacyldisaccharide 4'-kinase (328 aa).

55-62 lines the ATP pocket; that stretch reads TAGGNGKT.

The protein belongs to the LpxK family.

The catalysed reaction is a lipid A disaccharide + ATP = a lipid IVA + ADP + H(+). It participates in glycolipid biosynthesis; lipid IV(A) biosynthesis; lipid IV(A) from (3R)-3-hydroxytetradecanoyl-[acyl-carrier-protein] and UDP-N-acetyl-alpha-D-glucosamine: step 6/6. In terms of biological role, transfers the gamma-phosphate of ATP to the 4'-position of a tetraacyldisaccharide 1-phosphate intermediate (termed DS-1-P) to form tetraacyldisaccharide 1,4'-bis-phosphate (lipid IVA). The polypeptide is Tetraacyldisaccharide 4'-kinase (Escherichia coli O127:H6 (strain E2348/69 / EPEC)).